The following is a 69-amino-acid chain: Disintegrin EC6 subunit beta (69 aa).

Residues 1-65 (NSVHPCCDPV…DCPPNPWNGK (65 aa)) form the Disintegrin domain. Intrachain disulfides connect C6-C29, C20-C26, C25-C50, and C38-C57. A Cell attachment site motif is present at residues 42–44 (RGD).

It belongs to the venom metalloproteinase (M12B) family. P-II subfamily. P-IIe sub-subfamily. As to quaternary structure, heterodimer with subunit alpha; disulfide-linked. Expressed by the venom gland.

The protein resides in the secreted. Functionally, potently inhibits adhesion of alpha-4/beta-1 (ITGA4/ITGB1) and alpha-9/beta-1 (ITGA9/ITGB1) integrins to VCAM1, and adhesion of alpha-5/beta-1 (ITGA5/ITGB1) integrin to fibronectin. Has a much less effect on alpha-IIb/beta-3 (ITGA2B/ITGB3) integrin. Also potently inhibits neutrophil migration across TNF-alpha-activated human umbilical endothelial cells. This chain is Disintegrin EC6 subunit beta, found in Echis carinatus sochureki (Saw-scaled viper).